We begin with the raw amino-acid sequence, 1369 residues long: Phosphoribosylformylglycinamidine synthase (1369 aa).

2 disordered regions span residues 321 to 352 and 373 to 400; these read HPTA…AKPK and ENAR…KPDR. 330–341 lines the ATP pocket; it reads GASTGAGGEIRD. Alanine 721 lines the ATP pocket. Aspartate 722, glutamate 761, asparagine 765, and aspartate 934 together coordinate Mg(2+). Position 936 (serine 936) interacts with ATP. The Glutamine amidotransferase type-1 domain maps to 1116-1369; that stretch reads MAILREQGVN…MFRNARKQMG (254 aa). Residue cysteine 1209 is the Nucleophile of the active site. Catalysis depends on residues histidine 1330 and glutamate 1332.

In the N-terminal section; belongs to the FGAMS family. As to quaternary structure, monomer.

It localises to the cytoplasm. The catalysed reaction is N(2)-formyl-N(1)-(5-phospho-beta-D-ribosyl)glycinamide + L-glutamine + ATP + H2O = 2-formamido-N(1)-(5-O-phospho-beta-D-ribosyl)acetamidine + L-glutamate + ADP + phosphate + H(+). The protein operates within purine metabolism; IMP biosynthesis via de novo pathway; 5-amino-1-(5-phospho-D-ribosyl)imidazole from N(2)-formyl-N(1)-(5-phospho-D-ribosyl)glycinamide: step 1/2. Phosphoribosylformylglycinamidine synthase involved in the purines biosynthetic pathway. Catalyzes the ATP-dependent conversion of formylglycinamide ribonucleotide (FGAR) and glutamine to yield formylglycinamidine ribonucleotide (FGAM) and glutamate. The polypeptide is Phosphoribosylformylglycinamidine synthase (Ralstonia nicotianae (strain ATCC BAA-1114 / GMI1000) (Ralstonia solanacearum)).